Consider the following 637-residue polypeptide: Biosynthetic arginine decarboxylase (637 aa).

An N6-(pyridoxal phosphate)lysine modification is found at lysine 107. 289 to 299 contributes to the substrate binding site; sequence LDVGGGLGVDY.

Belongs to the Orn/Lys/Arg decarboxylase class-II family. SpeA subfamily. Mg(2+) is required as a cofactor. The cofactor is pyridoxal 5'-phosphate.

It catalyses the reaction L-arginine + H(+) = agmatine + CO2. Functionally, catalyzes the biosynthesis of agmatine from arginine. The chain is Biosynthetic arginine decarboxylase from Thermosynechococcus vestitus (strain NIES-2133 / IAM M-273 / BP-1).